The sequence spans 215 residues: Cytochrome b6 (215 aa).

The helical transmembrane segment at 32 to 52 threads the bilayer; it reads IFYCLGGITLTCFLVQVASGF. Cys-35 is a heme c binding site. Heme b contacts are provided by His-86 and His-100. Transmembrane regions (helical) follow at residues 90 to 110, 116 to 136, and 186 to 206; these read ASMM…TGGF, LTWV…VTGY, and LHTF…FLMI. 2 residues coordinate heme b: His-187 and His-202.

Belongs to the cytochrome b family. PetB subfamily. As to quaternary structure, the 4 large subunits of the cytochrome b6-f complex are cytochrome b6, subunit IV (17 kDa polypeptide, PetD), cytochrome f and the Rieske protein, while the 4 small subunits are PetG, PetL, PetM and PetN. The complex functions as a dimer. The cofactor is heme b. Heme c serves as cofactor.

It localises to the plastid. Its subcellular location is the chloroplast thylakoid membrane. Component of the cytochrome b6-f complex, which mediates electron transfer between photosystem II (PSII) and photosystem I (PSI), cyclic electron flow around PSI, and state transitions. In Anthoceros angustus (Hornwort), this protein is Cytochrome b6.